We begin with the raw amino-acid sequence, 259 residues long: Acetylglutamate kinase (259 aa).

Substrate contacts are provided by residues 45-46 (GG), Arg67, and Asn159.

The protein belongs to the acetylglutamate kinase family. ArgB subfamily.

The protein resides in the cytoplasm. It catalyses the reaction N-acetyl-L-glutamate + ATP = N-acetyl-L-glutamyl 5-phosphate + ADP. It participates in amino-acid biosynthesis; L-arginine biosynthesis; N(2)-acetyl-L-ornithine from L-glutamate: step 2/4. Its function is as follows. Catalyzes the ATP-dependent phosphorylation of N-acetyl-L-glutamate. The chain is Acetylglutamate kinase from Aeromonas salmonicida (strain A449).